A 474-amino-acid polypeptide reads, in one-letter code: Pyoverdine export outer membrane protein OpmQ (474 aa).

A signal peptide spans methionine 1 to alanine 17. Residue cysteine 18 is the site of N-palmitoyl cysteine attachment. Residue cysteine 18 is the site of S-diacylglycerol cysteine attachment.

This sequence belongs to the outer membrane factor (OMF) (TC 1.B.17) family. Part of the tripartite efflux system PvdRT-OpmQ, which is composed of an inner membrane component with both ATPase and permease domains, PvdT, a periplasmic membrane fusion protein, PvdR, and an outer membrane component, OpmQ.

It is found in the cell outer membrane. Its function is as follows. Part of the tripartite efflux system PvdRT-OpmQ required for the secretion into the extracellular milieu of the siderophore pyoverdine (PVD), which is involved in iron acquisition. The system is responsible for export of newly synthesized PVD after the final steps of biosynthesis have taken place in the periplasm. It is also responsible for recycling of PVD after internalization of ferri-PVD into the periplasm by the outer-membrane receptor FpvA and release of iron from PVD, thus making PVD available for new cycles of iron uptake. In addition, can expel unwanted metals complexed with PVD from the periplasm into the extracellular medium. In Pseudomonas aeruginosa (strain ATCC 15692 / DSM 22644 / CIP 104116 / JCM 14847 / LMG 12228 / 1C / PRS 101 / PAO1), this protein is Pyoverdine export outer membrane protein OpmQ.